Reading from the N-terminus, the 505-residue chain is Histidine ammonia-lyase (505 aa).

A cross-link (5-imidazolinone (Ala-Gly)) is located at residues 141–143 (ASG). S142 is modified (2,3-didehydroalanine (Ser)).

This sequence belongs to the PAL/histidase family. In terms of processing, contains an active site 4-methylidene-imidazol-5-one (MIO), which is formed autocatalytically by cyclization and dehydration of residues Ala-Ser-Gly.

The protein resides in the cytoplasm. The catalysed reaction is L-histidine = trans-urocanate + NH4(+). It participates in amino-acid degradation; L-histidine degradation into L-glutamate; N-formimidoyl-L-glutamate from L-histidine: step 1/3. The chain is Histidine ammonia-lyase from Bacillus cereus (strain ZK / E33L).